The primary structure comprises 542 residues: CTP synthase (542 aa).

The tract at residues 1–266 is amidoligase domain; it reads MATNYIFVTG…DEFVCNRFHL (266 aa). CTP is bound at residue Ser14. Ser14 is a binding site for UTP. ATP-binding positions include 15–20 and Asp72; that span reads SLGKGI. Asp72 and Glu140 together coordinate Mg(2+). CTP is bound by residues 147–149, 187–192, and Lys223; these read DIE and KTKPTQ. UTP contacts are provided by residues 187 to 192 and Lys223; that span reads KTKPTQ. Residue 239-241 participates in ATP binding; sequence KDV. In terms of domain architecture, Glutamine amidotransferase type-1 spans 291-542; it reads TIGMVGKYVE…VKAAKENQKK (252 aa). Gly352 contributes to the L-glutamine binding site. The active-site Nucleophile; for glutamine hydrolysis is the Cys379. L-glutamine contacts are provided by residues 380-383, Glu403, and Arg470; that span reads LGMQ. Catalysis depends on residues His515 and Glu517.

This sequence belongs to the CTP synthase family. Homotetramer.

It carries out the reaction UTP + L-glutamine + ATP + H2O = CTP + L-glutamate + ADP + phosphate + 2 H(+). It catalyses the reaction L-glutamine + H2O = L-glutamate + NH4(+). The catalysed reaction is UTP + NH4(+) + ATP = CTP + ADP + phosphate + 2 H(+). The protein operates within pyrimidine metabolism; CTP biosynthesis via de novo pathway; CTP from UDP: step 2/2. Its activity is regulated as follows. Allosterically activated by GTP, when glutamine is the substrate; GTP has no effect on the reaction when ammonia is the substrate. The allosteric effector GTP functions by stabilizing the protein conformation that binds the tetrahedral intermediate(s) formed during glutamine hydrolysis. Inhibited by the product CTP, via allosteric rather than competitive inhibition. In terms of biological role, catalyzes the ATP-dependent amination of UTP to CTP with either L-glutamine or ammonia as the source of nitrogen. Regulates intracellular CTP levels through interactions with the four ribonucleotide triphosphates. In Actinobacillus succinogenes (strain ATCC 55618 / DSM 22257 / CCUG 43843 / 130Z), this protein is CTP synthase.